A 118-amino-acid chain; its full sequence is Fluoride-specific ion channel FluC 2 (118 aa).

Transmembrane regions (helical) follow at residues 1-21, 33-53, 55-75, and 91-111; these read MIEA…RFAI, FPLA…YIIG, GVTT…FTTF, and ISTF…FAFL. 2 residues coordinate Na(+): G70 and T73.

The protein belongs to the fluoride channel Fluc/FEX (TC 1.A.43) family.

The protein resides in the cell membrane. The enzyme catalyses fluoride(in) = fluoride(out). Its activity is regulated as follows. Na(+) is not transported, but it plays an essential structural role and its presence is essential for fluoride channel function. In terms of biological role, fluoride-specific ion channel. Important for reducing fluoride concentration in the cell, thus reducing its toxicity. The sequence is that of Fluoride-specific ion channel FluC 2 from Bacillus cereus (strain ATCC 14579 / DSM 31 / CCUG 7414 / JCM 2152 / NBRC 15305 / NCIMB 9373 / NCTC 2599 / NRRL B-3711).